The sequence spans 235 residues: Small ribosomal subunit protein eS4 (235 aa).

Residues 38–99 (VTLLSIIRDY…GESYRVVYND (62 aa)) enclose the S4 RNA-binding domain.

The protein belongs to the eukaryotic ribosomal protein eS4 family.

The sequence is that of Small ribosomal subunit protein eS4 (rps4e) from Thermoplasma acidophilum (strain ATCC 25905 / DSM 1728 / JCM 9062 / NBRC 15155 / AMRC-C165).